We begin with the raw amino-acid sequence, 484 residues long: UDP-N-acetylmuramate--L-alanine ligase (484 aa).

128 to 134 contributes to the ATP binding site; it reads GTHGKTT.

Belongs to the MurCDEF family.

Its subcellular location is the cytoplasm. The enzyme catalyses UDP-N-acetyl-alpha-D-muramate + L-alanine + ATP = UDP-N-acetyl-alpha-D-muramoyl-L-alanine + ADP + phosphate + H(+). The protein operates within cell wall biogenesis; peptidoglycan biosynthesis. In terms of biological role, cell wall formation. The protein is UDP-N-acetylmuramate--L-alanine ligase of Shewanella loihica (strain ATCC BAA-1088 / PV-4).